The following is a 491-amino-acid chain: Xaa-Pro aminopeptidase 1 (491 aa).

The tract at residues 1-32 (MAEELTPENPAIPETPEETEEPIKQRKNGLYP) is disordered. Residues D308, D320, H403, E434, and E458 each coordinate Mn(2+).

Belongs to the peptidase M24B family. Homodimer. Mn(2+) is required as a cofactor.

The enzyme catalyses Release of any N-terminal amino acid, including proline, that is linked to proline, even from a dipeptide or tripeptide.. This is Xaa-Pro aminopeptidase 1 (pepPI) from Streptomyces coelicolor (strain ATCC BAA-471 / A3(2) / M145).